The sequence spans 282 residues: Bifunctional protein FolD (282 aa).

NADP(+)-binding positions include 165–167 and I231; that span reads GAS.

This sequence belongs to the tetrahydrofolate dehydrogenase/cyclohydrolase family. In terms of assembly, homodimer.

The enzyme catalyses (6R)-5,10-methylene-5,6,7,8-tetrahydrofolate + NADP(+) = (6R)-5,10-methenyltetrahydrofolate + NADPH. It catalyses the reaction (6R)-5,10-methenyltetrahydrofolate + H2O = (6R)-10-formyltetrahydrofolate + H(+). Its pathway is one-carbon metabolism; tetrahydrofolate interconversion. Functionally, catalyzes the oxidation of 5,10-methylenetetrahydrofolate to 5,10-methenyltetrahydrofolate and then the hydrolysis of 5,10-methenyltetrahydrofolate to 10-formyltetrahydrofolate. The sequence is that of Bifunctional protein FolD from Francisella tularensis subsp. mediasiatica (strain FSC147).